The sequence spans 679 residues: Sodium-dependent phosphate transporter 1 (679 aa).

6 helical membrane-spanning segments follow: residues 21–41 (YLWM…SVGA), 62–82 (ACIL…AKVS), 100–120 (GLLM…QLVA), 158–178 (IVMS…ILFF), 203–223 (ACTV…LLGF), and 230–250 (GTIL…WFFV). Residues Ser265 and Ser269 each carry the phosphoserine modification. Residues 268–288 (ESPLMEKKNSLKEDHEETKLS) form a disordered region. The segment covering 271-286 (LMEKKNSLKEDHEETK) has biased composition (basic and acidic residues). 4 helical membrane passes run 511–531 (VSLL…FAHG), 558–578 (VATP…GLWV), 600–620 (FSIE…GLPI), and 650–670 (IFMA…AIMA). The interval 550–558 (DTGDVSSKV) is a.

It belongs to the inorganic phosphate transporter (PiT) (TC 2.A.20) family.

Its subcellular location is the cell membrane. It catalyses the reaction 2 Na(+)(out) + phosphate(out) = 2 Na(+)(in) + phosphate(in). Its function is as follows. Sodium-phosphate symporter which preferentially transports the monovalent form of phosphate with a stoichiometry of two sodium ions per phosphate ion. May play a role in extracellular matrix and cartilage calcification as well as in vascular calcification. Essential for cell proliferation but this function is independent of its phosphate transporter activity. The sequence is that of Sodium-dependent phosphate transporter 1 (SLC20A1) from Pongo abelii (Sumatran orangutan).